The following is a 421-amino-acid chain: Probable sugar-binding periplasmic protein (421 aa).

The signal sequence occupies residues 1–27; the sequence is MHKLLKLAAMGTAACALLAGMAPVANA.

This sequence belongs to the bacterial solute-binding protein 1 family.

It localises to the periplasm. In terms of biological role, part of a binding-protein-dependent transport system for a sugar. The sequence is that of Probable sugar-binding periplasmic protein from Brucella suis biovar 1 (strain 1330).